A 662-amino-acid polypeptide reads, in one-letter code: MNFPWDQLLVKGNWMIISAQIAAPFLVIGLIAVISYFKLWKYLYKEWFTSVDHKKIGIMYLISAVLMFVRGGIDALMLRTQLTIPDNKFLEANHYNEVFTTHGVIMIIFMAMPFIFGLWNVVIPLQLGARDVAFPVMNNVSFWLFFAGMILFNLSFIVGGSPAAGWTNYAPLAGEFSPGPGVNYYLIAIQISGIGSLMTGINFFVTILRCKTPTMKFMQMPMFSVTTFITTLIVILAFPVFTVALALMTADRIFGTQFFTVANGGMPMLWANFFWVWGHPEVYIVILPAFGMYSEIIPTFARKRLFGHQSMIWATAGIAFLSFLVWVHHFFTMGNGALINSFFSISTMLIGVPTGVKLFNWLLTLYKGRITFESPMLFSLAFIPNFLLGGVTGVMLAMASADYQYHNTYFLVAHFHYTLVTGVVFACLAGLIFWYPKMMGYKLNETLNKWCFWFFMIGFNVCFLPQFILGLDGMPRRLYTYMPSDGWWLLNFISTIGAVLMAIGFLFLVASIVYSHIKAPREATGDNWDGLGRTLEWSTASAIPPKYNFAITPDWNDYDTFVDMKEHGRHYLDNHNYKDIHMPNNTPVGFWMGIFMTIGGFFLIFESIVPALICLAGIFITMIWRSFQIDHGYHIPASEVAETEARLREARIKEREAVSHES.

2 consecutive transmembrane segments (helical) span residues 14–34 (WMII…IAVI) and 56–76 (IGIM…IDAL). Histidine 102 is a Fe(II)-heme a binding site. Transmembrane regions (helical) follow at residues 103 to 123 (GVIM…NVVI), 140 to 160 (VSFW…IVGG), 187 to 207 (IAIQ…FVTI), 228 to 248 (FITT…LALM), 273 to 293 (FFWV…FGMY), 311 to 331 (MIWA…HHFF), 336 to 356 (GALI…PTGV), and 376 to 396 (MLFS…GVML). 4 residues coordinate Cu cation: histidine 279, tyrosine 283, histidine 328, and histidine 329. A cross-link (1'-histidyl-3'-tyrosine (His-Tyr)) is located at residues 279-283 (HPEVY). Histidine 414 contacts heme a3. 5 consecutive transmembrane segments (helical) span residues 415–435 (FHYT…IFWY), 451–471 (CFWF…ILGL), 492–512 (FIST…VASI), 587–604 (PVGF…FFLI), and 608–627 (IVPA…WRSF). Position 416 (histidine 416) interacts with Fe(II)-heme a.

It belongs to the heme-copper respiratory oxidase family. Cu cation serves as cofactor. Requires ferriheme a as cofactor. It depends on Heme A3. as a cofactor.

It localises to the cell membrane. The catalysed reaction is 2 a quinol + O2 = 2 a quinone + 2 H2O. It functions in the pathway energy metabolism; oxidative phosphorylation. Catalyzes quinol oxidation with the concomitant reduction of oxygen to water. The sequence is that of Probable quinol oxidase subunit 1 (qoxB) from Staphylococcus epidermidis (strain ATCC 35984 / DSM 28319 / BCRC 17069 / CCUG 31568 / BM 3577 / RP62A).